Here is a 306-residue protein sequence, read N- to C-terminus: Curved DNA-binding protein (306 aa).

Positions 5-69 constitute a J domain; it reads DYYAIMGVKP…QRRAEYDQMW (65 aa).

The protein resides in the cytoplasm. It is found in the nucleoid. Its function is as follows. DNA-binding protein that preferentially recognizes a curved DNA sequence. It is probably a functional analog of DnaJ; displays overlapping activities with DnaJ, but functions under different conditions, probably acting as a molecular chaperone in an adaptive response to environmental stresses other than heat shock. Lacks autonomous chaperone activity; binds native substrates and targets them for recognition by DnaK. Its activity is inhibited by the binding of CbpM. The sequence is that of Curved DNA-binding protein from Escherichia coli O7:K1 (strain IAI39 / ExPEC).